The primary structure comprises 4965 residues: Auxin transport protein BIG (4965 aa).

The next 3 helical transmembrane spans lie at 289–309 (SDIC…IFSP), 646–666 (ACLA…AYEV), and 772–792 (LFLI…YEGL). The segment at 1383 to 1425 (TNQESNSTVDCDASSGEEDEDDGTSDGELVSIDRDEEEDGNSE) is disordered. The segment covering 1397 to 1407 (SGEEDEDDGTS) has biased composition (acidic residues). Residues 1431 to 1502 (KVCTFTSSGS…RGSSCQCLKP (72 aa)) form a UBR-type zinc finger. The disordered stretch occupies residues 2437–2456 (DDAPDNHAKASAASNSTTGN). Low complexity predominate over residues 2445–2456 (KASAASNSTTGN). Residues 2469–2528 (SVQYCCDGCSTVPILRRRWHCNICPDFDLCETCYEILDADRLPAPHSRDHPMSAIPIELD) form a ZZ-type zinc finger. Zn(2+)-binding residues include C2474, C2477, C2489, C2492, C2498, C2501, H2514, and H2518. The tract at residues 2997–3037 (NAQKTESGDIGSSTRTGSQSSDSKKKRKGDDSSEGSSEKSC) is disordered. The segment covering 3007–3017 (GSSTRTGSQSS) has biased composition (low complexity). Positions 3024 to 3037 (KGDDSSEGSSEKSC) are enriched in basic and acidic residues. The MYND-type; degenerate zinc-finger motif lies at 3319–3359 (CPRCSRSVTDKHGICSNCHENAYQCRQCRNINYENLDSFLC). Residues 3672-3721 (PKSDSGEKEPGMGKSSLMQAKNDDTVGHSVTNLSTSKTQSELSGKIPDGS) form a disordered region. Residues 3699 to 3713 (HSVTNLSTSKTQSEL) show a composition bias toward polar residues. The segment at 4433-4963 (PSIPLILSML…DFVRAIIHGA (531 aa)) is UBR4 E3 catalytic module. The HemiRING-type zinc-finger motif lies at 4562 to 4681 (GLACMVCREG…WDQLNSLGRA (120 aa)). 4 residues coordinate Zn(2+): C4565, C4568, H4615, and C4618. A UZI domain is found at 4684–4963 (SRLRLLTYDI…DFVRAIIHGA (280 aa)). Over residues 4753 to 4770 (SSSPSTPESPVRLSALSG) the composition is skewed to low complexity. Disordered regions lie at residues 4753–4778 (SSSP…SGSS) and 4822–4846 (STLK…ADSN). Polar residues predominate over residues 4824 to 4845 (LKLSADTSSSAVRSDEGSSADS).

This sequence belongs to the UBR4 family.

It localises to the membrane. Functionally, required for auxin efflux and polar auxin transport (PAT) influencing auxin-mediated developmental responses (e.g. cell elongation, apical dominance, lateral root production, inflorescence architecture, general growth and development). The chain is Auxin transport protein BIG from Oryza sativa subsp. japonica (Rice).